The chain runs to 268 residues: Hydroxyacylglutathione hydrolase (268 aa).

Residues histidine 56, histidine 58, aspartate 60, histidine 61, histidine 113, aspartate 130, and histidine 168 each contribute to the Zn(2+) site.

The protein belongs to the metallo-beta-lactamase superfamily. Glyoxalase II family. As to quaternary structure, monomer. Requires Zn(2+) as cofactor.

It catalyses the reaction an S-(2-hydroxyacyl)glutathione + H2O = a 2-hydroxy carboxylate + glutathione + H(+). It functions in the pathway secondary metabolite metabolism; methylglyoxal degradation; (R)-lactate from methylglyoxal: step 2/2. Functionally, thiolesterase that catalyzes the hydrolysis of S-D-lactoyl-glutathione to form glutathione and D-lactic acid. This is Hydroxyacylglutathione hydrolase from Hydrogenovibrio crunogenus (strain DSM 25203 / XCL-2) (Thiomicrospira crunogena).